Consider the following 105-residue polypeptide: Guanyl-specific ribonuclease Ms (105 aa).

Intrachain disulfides connect C3/C11 and C7/C102. The active site involves H39. The active-site Proton acceptor is E57. H91 (proton donor) is an active-site residue.

This sequence belongs to the ribonuclease N1/T1 family.

The catalysed reaction is [RNA] containing guanosine + H2O = an [RNA fragment]-3'-guanosine-3'-phosphate + a 5'-hydroxy-ribonucleotide-3'-[RNA fragment].. The polypeptide is Guanyl-specific ribonuclease Ms (Aspergillus phoenicis (Aspergillus saitoi)).